The sequence spans 270 residues: Ribosomal RNA-processing protein 7 homolog (270 aa).

A coiled-coil region spans residues 233-268 (TFQIKKNRQEKAQELLKKFEEDRKRITQLKQARNFK).

The protein belongs to the RRP7 family.

This is Ribosomal RNA-processing protein 7 homolog from Caenorhabditis elegans.